Reading from the N-terminus, the 188-residue chain is Cell division protein SepF (188 aa).

Belongs to the SepF family. As to quaternary structure, homodimer. Interacts with FtsZ.

Its subcellular location is the cytoplasm. Functionally, cell division protein that is part of the divisome complex and is recruited early to the Z-ring. Probably stimulates Z-ring formation, perhaps through the cross-linking of FtsZ protofilaments. Its function overlaps with FtsA. This chain is Cell division protein SepF, found in Synechococcus sp. (strain CC9605).